The chain runs to 108 residues: UPF0251 protein PF0620 (108 aa).

Belongs to the UPF0251 family.

This chain is UPF0251 protein PF0620, found in Pyrococcus furiosus (strain ATCC 43587 / DSM 3638 / JCM 8422 / Vc1).